A 186-amino-acid polypeptide reads, in one-letter code: NADH-quinone oxidoreductase subunit I (186 aa).

4Fe-4S ferredoxin-type domains lie at 70–100 (LTTR…IQSA) and 113–142 (DRFE…MSKD). C80, C83, C86, C90, C122, C125, C128, and C132 together coordinate [4Fe-4S] cluster.

It belongs to the complex I 23 kDa subunit family. In terms of assembly, NDH-1 is composed of 14 different subunits. Subunits NuoA, H, J, K, L, M, N constitute the membrane sector of the complex. [4Fe-4S] cluster is required as a cofactor.

The protein resides in the cell inner membrane. The catalysed reaction is a quinone + NADH + 5 H(+)(in) = a quinol + NAD(+) + 4 H(+)(out). NDH-1 shuttles electrons from NADH, via FMN and iron-sulfur (Fe-S) centers, to quinones in the respiratory chain. The immediate electron acceptor for the enzyme in this species is believed to be ubiquinone. Couples the redox reaction to proton translocation (for every two electrons transferred, four hydrogen ions are translocated across the cytoplasmic membrane), and thus conserves the redox energy in a proton gradient. In Pelobacter propionicus (strain DSM 2379 / NBRC 103807 / OttBd1), this protein is NADH-quinone oxidoreductase subunit I.